Consider the following 298-residue polypeptide: Protoheme IX farnesyltransferase (298 aa).

Helical transmembrane passes span 19–39 (VMSL…QPVN), 40–60 (PFVA…SGAL), 91–111 (LAVG…GGNW), 112–132 (FAAG…TIWL), 140–160 (IVIG…LPTG), 167–187 (LLMF…LALF), 213–233 (IFAY…TSVG), 236–256 (LYLA…WQIL), and 277–297 (LSLY…WVGG).

Belongs to the UbiA prenyltransferase family. Protoheme IX farnesyltransferase subfamily. As to quaternary structure, interacts with CtaA.

The protein localises to the cell inner membrane. It carries out the reaction heme b + (2E,6E)-farnesyl diphosphate + H2O = Fe(II)-heme o + diphosphate. The protein operates within porphyrin-containing compound metabolism; heme O biosynthesis; heme O from protoheme: step 1/1. Its function is as follows. Converts heme B (protoheme IX) to heme O by substitution of the vinyl group on carbon 2 of heme B porphyrin ring with a hydroxyethyl farnesyl side group. This chain is Protoheme IX farnesyltransferase, found in Paracoccus denitrificans.